A 63-amino-acid chain; its full sequence is MAHPKAKVSKSRRDKRRAQFNARTKAATTVNCPNCGEPTLPHRACRHCGHYRGRAVVAKAANS.

Basic residues predominate over residues 1 to 18; the sequence is MAHPKAKVSKSRRDKRRA. The disordered stretch occupies residues 1-25; that stretch reads MAHPKAKVSKSRRDKRRAQFNARTK.

It belongs to the bacterial ribosomal protein bL32 family.

The protein is Large ribosomal subunit protein bL32 of Chlorobium phaeovibrioides (strain DSM 265 / 1930) (Prosthecochloris vibrioformis (strain DSM 265)).